The primary structure comprises 409 residues: Tyrosine--tRNA ligase (409 aa).

L-tyrosine is bound at residue Tyr-39. The 'HIGH' region signature appears at 44 to 53 (PTAPSLHVGS). L-tyrosine-binding residues include Tyr-176 and Gln-180. The 'KMSKS' region motif lies at 236 to 240 (KMGKT). Residue Lys-239 participates in ATP binding. The S4 RNA-binding domain maps to 346-409 (IGIVDALVGL…KKKHGILRKA (64 aa)).

This sequence belongs to the class-I aminoacyl-tRNA synthetase family. TyrS type 1 subfamily. In terms of assembly, homodimer.

The protein localises to the cytoplasm. The catalysed reaction is tRNA(Tyr) + L-tyrosine + ATP = L-tyrosyl-tRNA(Tyr) + AMP + diphosphate + H(+). Catalyzes the attachment of tyrosine to tRNA(Tyr) in a two-step reaction: tyrosine is first activated by ATP to form Tyr-AMP and then transferred to the acceptor end of tRNA(Tyr). This chain is Tyrosine--tRNA ligase, found in Novosphingobium aromaticivorans (strain ATCC 700278 / DSM 12444 / CCUG 56034 / CIP 105152 / NBRC 16084 / F199).